The primary structure comprises 585 residues: Glycerol-3-phosphate dehydrogenase 2 (585 aa).

FAD is bound at residue 37–65 (DVVVIGGGVVGSGCALDAATRGLKVALVE).

Belongs to the FAD-dependent glycerol-3-phosphate dehydrogenase family. The cofactor is FAD.

It localises to the cytoplasm. The enzyme catalyses a quinone + sn-glycerol 3-phosphate = dihydroxyacetone phosphate + a quinol. This is Glycerol-3-phosphate dehydrogenase 2 (glpD2) from Mycobacterium bovis (strain ATCC BAA-935 / AF2122/97).